A 136-amino-acid chain; its full sequence is Large ribosomal subunit protein uL16 (136 aa).

This sequence belongs to the universal ribosomal protein uL16 family. In terms of assembly, part of the 50S ribosomal subunit.

Binds 23S rRNA and is also seen to make contacts with the A and possibly P site tRNAs. The chain is Large ribosomal subunit protein uL16 from Actinobacillus succinogenes (strain ATCC 55618 / DSM 22257 / CCUG 43843 / 130Z).